The following is a 238-amino-acid chain: Ion-translocating oxidoreductase complex subunit E (238 aa).

The next 5 helical transmembrane spans lie at leucine 41–valine 61, leucine 71–alanine 91, glutamate 95–glycine 115, serine 130–leucine 150, and glycine 184–leucine 204.

The protein belongs to the NqrDE/RnfAE family. In terms of assembly, the complex is composed of six subunits: RnfA, RnfB, RnfC, RnfD, RnfE and RnfG.

It localises to the cell inner membrane. In terms of biological role, part of a membrane-bound complex that couples electron transfer with translocation of ions across the membrane. The polypeptide is Ion-translocating oxidoreductase complex subunit E (Pseudomonas aeruginosa (strain UCBPP-PA14)).